The chain runs to 354 residues: Peptide chain release factor 1 (354 aa).

Q232 is modified (N5-methylglutamine).

The protein belongs to the prokaryotic/mitochondrial release factor family. In terms of processing, methylated by PrmC. Methylation increases the termination efficiency of RF1.

The protein localises to the cytoplasm. Functionally, peptide chain release factor 1 directs the termination of translation in response to the peptide chain termination codons UAG and UAA. This is Peptide chain release factor 1 from Jannaschia sp. (strain CCS1).